The sequence spans 119 residues: MIQKNTLLDVADNSGARKVLCIGLLNGKKSASVGDVIVVSTKLITPRGKVSKGKVYKAVIVRVKKAVRRLDGSVIKFSSNAVVLINDQGDPLGTRVFGPIKKLPFGLFSKVMSLAVEVL.

It belongs to the universal ribosomal protein uL14 family. As to quaternary structure, part of the 50S ribosomal subunit. Forms a cluster with proteins L3 and L19. In the 70S ribosome, L14 and L19 interact and together make contacts with the 16S rRNA in bridges B5 and B8.

Binds to 23S rRNA. Forms part of two intersubunit bridges in the 70S ribosome. The polypeptide is Large ribosomal subunit protein uL14 (Ehrlichia chaffeensis (strain ATCC CRL-10679 / Arkansas)).